Consider the following 342-residue polypeptide: Ribosomal RNA small subunit methyltransferase C (342 aa).

Belongs to the methyltransferase superfamily. RsmC family. As to quaternary structure, monomer.

The protein localises to the cytoplasm. It carries out the reaction guanosine(1207) in 16S rRNA + S-adenosyl-L-methionine = N(2)-methylguanosine(1207) in 16S rRNA + S-adenosyl-L-homocysteine + H(+). Specifically methylates the guanine in position 1207 of 16S rRNA in the 30S particle. This chain is Ribosomal RNA small subunit methyltransferase C, found in Shewanella loihica (strain ATCC BAA-1088 / PV-4).